Here is a 69-residue protein sequence, read N- to C-terminus: Putative membrane protein insertion efficiency factor (69 aa).

The protein belongs to the UPF0161 family.

It is found in the cell membrane. In terms of biological role, could be involved in insertion of integral membrane proteins into the membrane. The chain is Putative membrane protein insertion efficiency factor from Clostridium botulinum (strain 657 / Type Ba4).